The primary structure comprises 207 residues: DNA-directed RNA polymerase subunit alpha (207 aa).

This sequence belongs to the RNA polymerase alpha chain family. In plastids the minimal PEP RNA polymerase catalytic core is composed of four subunits: alpha, beta, beta', and beta''. When a (nuclear-encoded) sigma factor is associated with the core the holoenzyme is formed, which can initiate transcription.

The protein localises to the plastid. It localises to the chloroplast. The enzyme catalyses RNA(n) + a ribonucleoside 5'-triphosphate = RNA(n+1) + diphosphate. Functionally, DNA-dependent RNA polymerase catalyzes the transcription of DNA into RNA using the four ribonucleoside triphosphates as substrates. The chain is DNA-directed RNA polymerase subunit alpha (rpoA) from Euglena myxocylindracea.